The following is a 394-amino-acid chain: Elongation factor Tu 1 (394 aa).

A tr-type G domain is found at 10-204; sequence KPHVNVGTIG…ALDNYIPEPE (195 aa). The G1 stretch occupies residues 19–26; that stretch reads GHVDHGKT. 19-26 is a GTP binding site; it reads GHVDHGKT. Residue threonine 26 participates in Mg(2+) binding. Residues 60 to 64 form a G2 region; the sequence is GITIS. The tract at residues 81–84 is G3; sequence DCPG. GTP contacts are provided by residues 81–85 and 136–139; these read DCPGH and NKCD. Residues 136-139 are G4; that stretch reads NKCD. A G5 region spans residues 174–176; sequence SAL.

The protein belongs to the TRAFAC class translation factor GTPase superfamily. Classic translation factor GTPase family. EF-Tu/EF-1A subfamily. Monomer.

The protein resides in the cytoplasm. The enzyme catalyses GTP + H2O = GDP + phosphate + H(+). In terms of biological role, GTP hydrolase that promotes the GTP-dependent binding of aminoacyl-tRNA to the A-site of ribosomes during protein biosynthesis. The sequence is that of Elongation factor Tu 1 from Photobacterium profundum (strain SS9).